A 447-amino-acid polypeptide reads, in one-letter code: T-DNA border endonuclease VirD2 (447 aa).

Disordered regions lie at residues 214 to 265 (ADLE…QEPA) and 300 to 447 (SGSS…GNRR). Polar residues predominate over residues 251–260 (NNRQNESQVH). Low complexity predominate over residues 390-406 (TATTRASTATDSLSATA). A compositionally biased stretch (basic and acidic residues) spans 427–447 (PSERKRERDERSKDGRGGNRR).

Its function is as follows. Tumor formation by A.tumefaciens involves the transfer and integration of a defined segment (T-DNA) of Ti plasmid DNA into the plant nuclear genome. The virD operon encodes a site-specific endonuclease that cleaves at a unique site within both 24 bp direct repeats flanking the T-DNA. This is T-DNA border endonuclease VirD2 (virD2) from Agrobacterium fabrum (strain C58 / ATCC 33970) (Agrobacterium tumefaciens (strain C58)).